We begin with the raw amino-acid sequence, 233 residues long: Transcriptional regulatory protein WalR (233 aa).

Residues 4–117 enclose the Response regulatory domain; the sequence is KVVVVDDEKP…ELIARVKANL (114 aa). At aspartate 53 the chain carries 4-aspartylphosphate. The segment at residues 132–231 is a DNA-binding region (ompR/PhoB-type); that stretch reads TNEITIKDIV…RRGVGYFLQQ (100 aa).

Phosphorylated by WalK.

Its subcellular location is the cytoplasm. Member of the two-component regulatory system WalK/WalR. The chain is Transcriptional regulatory protein WalR (walR) from Staphylococcus haemolyticus (strain JCSC1435).